The primary structure comprises 79 residues: Dolichyl-diphosphooligosaccharide--protein glycosyltransferase subunit TMEM258 (79 aa).

2 helical membrane passes run 18–38 (LPLL…AFTM) and 55–75 (FIAA…LLWV).

It belongs to the OST5 family. As to quaternary structure, component of the oligosaccharyltransferase (OST) complex.

The protein localises to the membrane. Its pathway is protein modification; protein glycosylation. Functionally, subunit of the oligosaccharyl transferase (OST) complex that catalyzes the initial transfer of a defined glycan (Glc(3)Man(9)GlcNAc(2) in eukaryotes) from the lipid carrier dolichol-pyrophosphate to an asparagine residue within an Asn-X-Ser/Thr consensus motif in nascent polypeptide chains, the first step in protein N-glycosylation. N-glycosylation occurs cotranslationally and the complex associates with the Sec61 complex at the channel-forming translocon complex that mediates protein translocation across the endoplasmic reticulum (ER). All subunits are required for a maximal enzyme activity. This Caenorhabditis briggsae protein is Dolichyl-diphosphooligosaccharide--protein glycosyltransferase subunit TMEM258.